A 344-amino-acid chain; its full sequence is Glycerol-3-phosphate dehydrogenase [NAD(P)+] 2 (344 aa).

5 residues coordinate NADPH: serine 12, tryptophan 13, arginine 33, arginine 34, and lysine 107. Lysine 107, glycine 138, and serine 140 together coordinate sn-glycerol 3-phosphate. Alanine 142 is an NADPH binding site. Sn-glycerol 3-phosphate is bound by residues lysine 193, aspartate 246, serine 256, arginine 257, and asparagine 258. Residue lysine 193 is the Proton acceptor of the active site. Arginine 257 serves as a coordination point for NADPH. The NADPH site is built by valine 281 and glutamate 283.

This sequence belongs to the NAD-dependent glycerol-3-phosphate dehydrogenase family.

The protein localises to the cytoplasm. It carries out the reaction sn-glycerol 3-phosphate + NAD(+) = dihydroxyacetone phosphate + NADH + H(+). It catalyses the reaction sn-glycerol 3-phosphate + NADP(+) = dihydroxyacetone phosphate + NADPH + H(+). It participates in membrane lipid metabolism; glycerophospholipid metabolism. Functionally, catalyzes the reduction of the glycolytic intermediate dihydroxyacetone phosphate (DHAP) to sn-glycerol 3-phosphate (G3P), the key precursor for phospholipid synthesis. The chain is Glycerol-3-phosphate dehydrogenase [NAD(P)+] 2 from Salinibacter ruber (strain DSM 13855 / M31).